An 86-amino-acid polypeptide reads, in one-letter code: uncharacterized protein (86 aa).

The helical transmembrane segment at 63 to 85 threads the bilayer; sequence VGGRSPSIQNSFFFFFFFFFFFF.

Its subcellular location is the membrane. This is an uncharacterized protein from Dictyostelium discoideum (Social amoeba).